Consider the following 874-residue polypeptide: Valine--tRNA ligase (874 aa).

The interval 1–22 (MTENSQQPQPAPSTELPTQYTP) is disordered. The 'HIGH' region signature appears at 57-67 (PNVTGSLHLGH). Positions 531-535 (KMSKS) match the 'KMSKS' region motif. Lys-534 serves as a coordination point for ATP. Residues 805–871 (VIDFAAERKR…TRITAQLEKL (67 aa)) adopt a coiled-coil conformation.

It belongs to the class-I aminoacyl-tRNA synthetase family. ValS type 1 subfamily. As to quaternary structure, monomer.

It is found in the cytoplasm. The enzyme catalyses tRNA(Val) + L-valine + ATP = L-valyl-tRNA(Val) + AMP + diphosphate. Its function is as follows. Catalyzes the attachment of valine to tRNA(Val). As ValRS can inadvertently accommodate and process structurally similar amino acids such as threonine, to avoid such errors, it has a 'posttransfer' editing activity that hydrolyzes mischarged Thr-tRNA(Val) in a tRNA-dependent manner. The chain is Valine--tRNA ligase from Streptomyces coelicolor (strain ATCC BAA-471 / A3(2) / M145).